The sequence spans 142 residues: Large ribosomal subunit protein uL13c (142 aa).

Belongs to the universal ribosomal protein uL13 family. Part of the 50S ribosomal subunit.

Its subcellular location is the plastid. The protein localises to the chloroplast. In Porphyra purpurea (Red seaweed), this protein is Large ribosomal subunit protein uL13c.